Consider the following 793-residue polypeptide: von Willebrand factor A domain-containing protein 5A (793 aa).

The region spanning 1–131 (MEHHCGLITS…KVAVTLRYVQ (131 aa)) is the VIT domain. The 189-residue stretch at 281 to 469 (EFVFLMDRSG…FALQCAVDNI (189 aa)) folds into the VWFA domain. Position 622 is a phosphotyrosine (Tyr-622).

Its function is as follows. May play a role in tumorigenesis as a tumor suppressor. Altered expression of this protein and disruption of the molecular pathway it is involved in may contribute directly to or modify tumorigenesis. The polypeptide is von Willebrand factor A domain-containing protein 5A (Vwa5a) (Mus musculus (Mouse)).